Consider the following 307-residue polypeptide: Methionyl-tRNA formyltransferase (307 aa).

110–113 (SLLP) is a binding site for (6S)-5,6,7,8-tetrahydrofolate.

Belongs to the Fmt family.

The catalysed reaction is L-methionyl-tRNA(fMet) + (6R)-10-formyltetrahydrofolate = N-formyl-L-methionyl-tRNA(fMet) + (6S)-5,6,7,8-tetrahydrofolate + H(+). Functionally, attaches a formyl group to the free amino group of methionyl-tRNA(fMet). The formyl group appears to play a dual role in the initiator identity of N-formylmethionyl-tRNA by promoting its recognition by IF2 and preventing the misappropriation of this tRNA by the elongation apparatus. This is Methionyl-tRNA formyltransferase from Chromobacterium violaceum (strain ATCC 12472 / DSM 30191 / JCM 1249 / CCUG 213 / NBRC 12614 / NCIMB 9131 / NCTC 9757 / MK).